The chain runs to 368 residues: N-acetylneuraminate epimerase (368 aa).

Positions Met-1 to Ala-19 are cleaved as a signal peptide. 7 Kelch repeats span residues Thr-40–Asp-84, Asn-86–Asn-137, Lys-139–Ala-173, His-174–Gly-219, Thr-222–Gly-265, Glu-287–Asn-336, and Leu-338–Gln-367. Glu-228 serves as the catalytic Proton acceptor.

In terms of assembly, homodimer.

Its subcellular location is the periplasm. It carries out the reaction N-acetyl-alpha-neuraminate = N-acetyl-beta-neuraminate. Its function is as follows. Converts alpha-N-acetylneuranimic acid (Neu5Ac) to the beta-anomer, accelerating the equilibrium between the alpha- and beta-anomers. Probably facilitates sialidase-negative bacteria to compete successfully for limited amounts of extracellular Neu5Ac, which is likely taken up in the beta-anomer. In addition, the rapid removal of sialic acid from solution might be advantageous to the bacterium to damp down host responses. Forms linear aceneuramate during interconversion of Neu5Ac anomers. The sequence is that of N-acetylneuraminate epimerase (nanM) from Escherichia coli (strain K12).